We begin with the raw amino-acid sequence, 267 residues long: Probable aquaporin TIP3-2 (267 aa).

Met-1 is subject to N-acetylmethionine. An N-acetylalanine; in Probable aquaporin TIP3-2, N-terminally processed modification is found at Ala-2. Topologically, residues 2-26 are cytoplasmic; it reads ATSARRAYGFGRADEATHPDSIRAT. A helical membrane pass occupies residues 27–47; that stretch reads LAEFLSTFVFVFAGEGSILAL. The Vacuolar portion of the chain corresponds to 48-66; that stretch reads DKLYWDTAAHTGTNTPGGL. A helical membrane pass occupies residues 67–87; it reads VLVALAHALALFAAVSAAINV. Residues 88–110 are Cytoplasmic-facing; it reads SGGHVNPAVTFAALIGGRISVIR. The short motif at 93–95 is the NPA 1 element; that stretch reads NPA. The chain crosses the membrane as a helical span at residues 111 to 131; that stretch reads AIYYWVAQLIGAILACLLLRL. Residues 132-151 lie on the Vacuolar side of the membrane; the sequence is ATNGLRPVGFHVASGVSELH. Residues 152 to 172 traverse the membrane as a helical segment; it reads GLLMEIILTFALVYVVYSTAI. At 173 to 178 the chain is on the cytoplasmic side; sequence DPKRGS. Residues 179–199 traverse the membrane as a helical segment; the sequence is IGIIAPLAIGLIVGANILVGG. The Vacuolar portion of the chain corresponds to 200–226; it reads PFDGASMNPARAFGPALVGWRWSNHWI. Positions 207 to 209 match the NPA 2 motif; sequence NPA. A helical membrane pass occupies residues 227 to 247; that stretch reads YWVGPFIGGALAALIYEYMII. The Cytoplasmic segment spans residues 248-267; that stretch reads PSVNEPPHHSTHQPLAPEDY.

Belongs to the MIP/aquaporin (TC 1.A.8) family. TIP (TC 1.A.8.10) subfamily. As to expression, predominantly expressed in developing seeds. Also expressed in rosette leaves.

It is found in the vacuole membrane. In terms of biological role, aquaporins facilitate the transport of water and small neutral solutes across cell membranes. The protein is Probable aquaporin TIP3-2 (TIP3-2) of Arabidopsis thaliana (Mouse-ear cress).